A 126-amino-acid chain; its full sequence is uncharacterized protein (126 aa).

The next 3 helical transmembrane spans lie at leucine 4 to leucine 24, alanine 42 to proline 62, and isoleucine 64 to valine 84.

The protein resides in the membrane. This is an uncharacterized protein from Saccharomyces cerevisiae (strain ATCC 204508 / S288c) (Baker's yeast).